A 388-amino-acid polypeptide reads, in one-letter code: Formate-dependent phosphoribosylglycinamide formyltransferase (388 aa).

Residues 15-16 and E75 contribute to the N(1)-(5-phospho-beta-D-ribosyl)glycinamide site; that span reads EL. Residues R107, K148, 153–158, 188–191, and E196 contribute to the ATP site; these read SSGKGQ and EEFL. The ATP-grasp domain maps to 112 to 302; the sequence is DLASAELALL…EFELHLRAVL (191 aa). 2 residues coordinate Mg(2+): E261 and E273. Residues D280, K350, and 357–358 each bind N(1)-(5-phospho-beta-D-ribosyl)glycinamide; that span reads RR.

The protein belongs to the PurK/PurT family. In terms of assembly, homodimer.

The enzyme catalyses N(1)-(5-phospho-beta-D-ribosyl)glycinamide + formate + ATP = N(2)-formyl-N(1)-(5-phospho-beta-D-ribosyl)glycinamide + ADP + phosphate + H(+). The protein operates within purine metabolism; IMP biosynthesis via de novo pathway; N(2)-formyl-N(1)-(5-phospho-D-ribosyl)glycinamide from N(1)-(5-phospho-D-ribosyl)glycinamide (formate route): step 1/1. Its function is as follows. Involved in the de novo purine biosynthesis. Catalyzes the transfer of formate to 5-phospho-ribosyl-glycinamide (GAR), producing 5-phospho-ribosyl-N-formylglycinamide (FGAR). Formate is provided by PurU via hydrolysis of 10-formyl-tetrahydrofolate. This Prochlorococcus marinus (strain MIT 9313) protein is Formate-dependent phosphoribosylglycinamide formyltransferase.